A 311-amino-acid polypeptide reads, in one-letter code: DNA-directed RNA polymerase subunit alpha (311 aa).

An alpha N-terminal domain (alpha-NTD) region spans residues 1–227; that stretch reads MAQFQIECIE…NLFCSLRNLD (227 aa). The tract at residues 239–311 is alpha C-terminal domain (alpha-CTD); the sequence is DKKISQVLIE…GISLPKEKSD (73 aa).

It belongs to the RNA polymerase alpha chain family. As to quaternary structure, in plastids the minimal PEP RNA polymerase catalytic core is composed of four subunits: alpha, beta, beta', and beta''. When a (nuclear-encoded) sigma factor is associated with the core the holoenzyme is formed, which can initiate transcription.

The protein localises to the plastid. It is found in the chloroplast. It carries out the reaction RNA(n) + a ribonucleoside 5'-triphosphate = RNA(n+1) + diphosphate. In terms of biological role, DNA-dependent RNA polymerase catalyzes the transcription of DNA into RNA using the four ribonucleoside triphosphates as substrates. The sequence is that of DNA-directed RNA polymerase subunit alpha from Pyropia yezoensis (Susabi-nori).